The chain runs to 411 residues: Histidine--tRNA ligase (411 aa).

It belongs to the class-II aminoacyl-tRNA synthetase family. As to quaternary structure, homodimer.

The protein resides in the cytoplasm. The catalysed reaction is tRNA(His) + L-histidine + ATP = L-histidyl-tRNA(His) + AMP + diphosphate + H(+). The sequence is that of Histidine--tRNA ligase from Dictyoglomus turgidum (strain DSM 6724 / Z-1310).